The following is a 321-amino-acid chain: uncharacterized protein (321 aa).

A compositionally biased stretch (basic and acidic residues) spans 1 to 12 (MQGGREVGRESV). Positions 1–85 (MQGGREVGRE…GWGEFEGFQE (85 aa)) are disordered. Polar residues predominate over residues 53 to 67 (NANSSRLDEGLSSSR).

This is an uncharacterized protein from Rattus norvegicus (Rat).